Consider the following 480-residue polypeptide: Bifunctional pantoate ligase/cytidylate kinase (480 aa).

Residues 1–243 (MPTMGGLHQG…CGTTRLIDHV (243 aa)) are pantoate--beta-alanine ligase. 4–11 (MGGLHQGH) provides a ligand contact to ATP. Histidine 11 (proton donor) is an active-site residue. Glutamine 34 provides a ligand contact to (R)-pantoate. Beta-alanine is bound at residue glutamine 34. Residue 123 to 126 (GEKD) participates in ATP binding. Glutamine 129 contacts (R)-pantoate. ATP is bound by residues valine 152 and 160–163 (LSSR). Residues 244 to 480 (FLMTRQPLVA…GEEAWPTPAG (237 aa)) form a cytidylate kinase region.

This sequence in the N-terminal section; belongs to the pantothenate synthetase family. The protein in the C-terminal section; belongs to the cytidylate kinase family. Type 1 subfamily.

It localises to the cytoplasm. The catalysed reaction is (R)-pantoate + beta-alanine + ATP = (R)-pantothenate + AMP + diphosphate + H(+). It carries out the reaction CMP + ATP = CDP + ADP. The enzyme catalyses dCMP + ATP = dCDP + ADP. It functions in the pathway cofactor biosynthesis; (R)-pantothenate biosynthesis; (R)-pantothenate from (R)-pantoate and beta-alanine: step 1/1. Catalyzes the condensation of pantoate with beta-alanine in an ATP-dependent reaction via a pantoyl-adenylate intermediate. In terms of biological role, catalyzes the transfer of a phosphate group from ATP to either CMP or dCMP to form CDP or dCDP and ADP, respectively. This is Bifunctional pantoate ligase/cytidylate kinase from Synechococcus sp. (strain CC9605).